A 174-amino-acid chain; its full sequence is Repair DNA polymerase X (174 aa).

The tract at residues 42 to 51 (REEKMLNDVD) is involved in ssDNA binding. 2 residues coordinate Mg(2+): Asp49 and Asp51. The cysteines at positions 81 and 86 are disulfide-linked. Asp100 is a binding site for Mg(2+).

This sequence belongs to the DNA polymerase type-X family. It depends on Mg(2+) as a cofactor.

It is found in the virion. The enzyme catalyses DNA(n) + a 2'-deoxyribonucleoside 5'-triphosphate = DNA(n+1) + diphosphate. Error-prone polymerase lacking a proofreading 3'-5' exonuclease which catalyzes the gap-filling reaction during the DNA repair process. Specifically binds intermediates in the single-nucleotide base-excision repair process. Also catalyzes DNA polymerization with low nucleotide-insertion fidelity. Probably acts as a strategic DNA mutase, which gives rise to a rapid emergence of variants. Generates mismatched G-G pairs, in that case, the polymerase first binds the deoxynucleotide followed by mismatch formation. Together with the viral DNA ligase, fills the single nucleotide gaps generated by the AP endonuclease. Binds DNA with high affinity via the helix alphaE. The polypeptide is Repair DNA polymerase X (African swine fever virus (isolate Tick/South Africa/Pretoriuskop Pr4/1996) (ASFV)).